The following is a 236-amino-acid chain: Uridylate kinase (236 aa).

10–13 provides a ligand contact to ATP; that stretch reads KLSG. G52 contributes to the UMP binding site. ATP is bound by residues G53 and R57. UMP is bound by residues D72 and 133–140; that span reads TGNPFFTT. T160, Y166, and D169 together coordinate ATP.

The protein belongs to the UMP kinase family. Homohexamer.

It is found in the cytoplasm. The catalysed reaction is UMP + ATP = UDP + ADP. The protein operates within pyrimidine metabolism; CTP biosynthesis via de novo pathway; UDP from UMP (UMPK route): step 1/1. Its activity is regulated as follows. Inhibited by UTP. Functionally, catalyzes the reversible phosphorylation of UMP to UDP. This is Uridylate kinase from Cupriavidus metallidurans (strain ATCC 43123 / DSM 2839 / NBRC 102507 / CH34) (Ralstonia metallidurans).